Consider the following 45-residue polypeptide: Enterotoxin (45 aa).

One of 3 components (of 35, 45 and 105 kDa) of the enterotoxin.

One of 3 components required for cytotoxicity (tested in African green monkey Vero cells); the complex is not hemolytic. The protein is Enterotoxin of Bacillus cereus.